The primary structure comprises 513 residues: GMP synthase [glutamine-hydrolyzing] (513 aa).

A Glutamine amidotransferase type-1 domain is found at 5-196 (QILILDFGSQ…LYDIAKCNKD (192 aa)). The Nucleophile role is filled by cysteine 83. Residues histidine 170 and glutamate 172 contribute to the active site. Residues 197-388 (WNLDDFIDQQ…LGLPEEMINR (192 aa)) enclose the GMPS ATP-PPase domain. 224–230 (SGGVDSS) is an ATP binding site.

Homodimer.

It carries out the reaction XMP + L-glutamine + ATP + H2O = GMP + L-glutamate + AMP + diphosphate + 2 H(+). It participates in purine metabolism; GMP biosynthesis; GMP from XMP (L-Gln route): step 1/1. Catalyzes the synthesis of GMP from XMP. In Mesoplasma florum (strain ATCC 33453 / NBRC 100688 / NCTC 11704 / L1) (Acholeplasma florum), this protein is GMP synthase [glutamine-hydrolyzing].